A 291-amino-acid polypeptide reads, in one-letter code: MSKVPGPIVLMEPLSGKTSLIIKINAIHVSKRSKYQGILIVDTDDYGRTLVLDDYIQSSYYDEIYYHESLVHPAVTTHPRPSDVLILGGGEGATLREVLKHNTVKRAVMVDIDGDVVELSKKYLPQMHQGAFDDPRSEVRIEDGFVYVENALKRGEKFDVVIMDLTDPYSSDIAKQLYTPEFFGKVKRLLREDGIVVTQAGNSFYFPEAYDYVLQGVKGNFPIIAEYSVWIPSFGYAVNFVLGSLKHDPHSLSAEEVDKRLSERGVRAEFYSGKTHIALMNMPVIKKILRV.

Residues 5–245 (PGPIVLMEPL…YAVNFVLGSL (241 aa)) enclose the PABS domain. S-methyl-5'-thioadenosine is bound at residue glutamine 36. Spermidine is bound by residues histidine 67 and glutamate 91. S-methyl-5'-thioadenosine is bound by residues aspartate 111 and 143 to 144 (DG). Residue aspartate 164 is the Proton acceptor of the active site.

Belongs to the spermidine/spermine synthase family. Homodimer or homotetramer.

It localises to the cytoplasm. The catalysed reaction is norspermidine + S-adenosyl 3-(methylsulfanyl)propylamine = norspermine + S-methyl-5'-thioadenosine + H(+). It catalyses the reaction S-adenosyl 3-(methylsulfanyl)propylamine + spermidine = thermospermine + S-methyl-5'-thioadenosine + H(+). In terms of biological role, involved in the biosynthesis of polyamines which are thought to support the growth of thermophilic microorganisms under high-temperature conditions. It seems that long-chain and branched-chain of polyamines effectively stabilize DNA and RNA, respectively. Catalyzes the irreversible transfer of a propylamine group from the amino donor S-adenosylmethioninamine (decarboxy-AdoMet) to norspermidine and 1,3-diaminopropane to yield norspermine, and to spermidine to yield thermospermine. It can also synthesize thermospermine from putrescine (1,4-diaminobutane) and caldopentamine from norspermine with a very low activity. The biosynthesis of caldohexamine and caldoheptamine from caldopentamine has been also observed. The chain is Polyamine aminopropyltransferase from Pyrobaculum aerophilum (strain ATCC 51768 / DSM 7523 / JCM 9630 / CIP 104966 / NBRC 100827 / IM2).